The following is a 616-amino-acid chain: 1-deoxy-D-xylulose-5-phosphate synthase (616 aa).

Thiamine diphosphate contacts are provided by residues His74 and 115-117 (GHS). A Mg(2+)-binding site is contributed by Asp146. Thiamine diphosphate is bound by residues 147–148 (GA), Asn175, Tyr282, and Glu365. Residue Asn175 coordinates Mg(2+).

Belongs to the transketolase family. DXPS subfamily. In terms of assembly, homodimer. Mg(2+) is required as a cofactor. It depends on thiamine diphosphate as a cofactor.

It carries out the reaction D-glyceraldehyde 3-phosphate + pyruvate + H(+) = 1-deoxy-D-xylulose 5-phosphate + CO2. The protein operates within metabolic intermediate biosynthesis; 1-deoxy-D-xylulose 5-phosphate biosynthesis; 1-deoxy-D-xylulose 5-phosphate from D-glyceraldehyde 3-phosphate and pyruvate: step 1/1. In terms of biological role, catalyzes the acyloin condensation reaction between C atoms 2 and 3 of pyruvate and glyceraldehyde 3-phosphate to yield 1-deoxy-D-xylulose-5-phosphate (DXP). This Chromobacterium violaceum (strain ATCC 12472 / DSM 30191 / JCM 1249 / CCUG 213 / NBRC 12614 / NCIMB 9131 / NCTC 9757 / MK) protein is 1-deoxy-D-xylulose-5-phosphate synthase.